We begin with the raw amino-acid sequence, 306 residues long: Dihydroorotate dehydrogenase B (NAD(+)), catalytic subunit (306 aa).

Residues Ser23 and Lys47 to Ser48 contribute to the FMN site. Substrate contacts are provided by residues Lys47, Asn71–Leu75, and Asn130. Asn130 provides a ligand contact to FMN. Catalysis depends on Cys133, which acts as the Nucleophile. 2 residues coordinate FMN: Lys168 and Ile194. Position 195–196 (Asn195–Thr196) interacts with substrate. Residues Gly220, Gly246–Gly247, and Gly268–Ser269 contribute to the FMN site.

Belongs to the dihydroorotate dehydrogenase family. Type 1 subfamily. As to quaternary structure, heterotetramer of 2 PyrK and 2 PyrD type B subunits. FMN serves as cofactor.

The protein resides in the cytoplasm. The enzyme catalyses (S)-dihydroorotate + NAD(+) = orotate + NADH + H(+). It participates in pyrimidine metabolism; UMP biosynthesis via de novo pathway; orotate from (S)-dihydroorotate (NAD(+) route): step 1/1. Its function is as follows. Catalyzes the conversion of dihydroorotate to orotate with NAD(+) as electron acceptor. The polypeptide is Dihydroorotate dehydrogenase B (NAD(+)), catalytic subunit (pyrD) (Methanocaldococcus jannaschii (strain ATCC 43067 / DSM 2661 / JAL-1 / JCM 10045 / NBRC 100440) (Methanococcus jannaschii)).